Reading from the N-terminus, the 494-residue chain is MFQVQKELAGHEAVIVALFEEEKMSSFVQELDKAFEGQLQVLLEEKELSTKKKAISKVHSLGKTNVKRYYFVGLGKKESYTTETLRAALGKAFKTLQAAKVQDAAILLDSFVTEKLDAIDVAHIAAEVQGLGTYELQTYKSDKKDRVELEKFMAITSEDAQEIEAALTVGYVHGRATNSARTLVNMPPNVLTATKLAEYAVELAEKYDMDYKVLEKEEMEDLGMGALLAVNQGSVEPPKMIALIYKGKEEWKDVIGFVGKGITYDTGGYSLKPREGMVGMKGDMGGAAAVLGAMEIIGELRPEQNVIAVIPSTDNVVSGTAFKPDDVITSMSGKTIEVLNTDAEGRLALADGITYAKKLGANYLVDVATLTGGVIVALGNYTTGAMTNNEELFEQVLEASMETDEPIWQLPIFDRDKERVRNSKFADLNNSPGREGHAVMAGTFLGEFAEDTPWVHLDIAGTSETKGAHDLGPAGATGAMVRTLATLVERFGEE.

Mn(2+) contacts are provided by Lys-260 and Asp-265. Residue Lys-272 is part of the active site. Mn(2+) is bound by residues Asp-283, Asp-342, and Glu-344. The active site involves Arg-346.

It belongs to the peptidase M17 family. The cofactor is Mn(2+).

It is found in the cytoplasm. It carries out the reaction Release of an N-terminal amino acid, Xaa-|-Yaa-, in which Xaa is preferably Leu, but may be other amino acids including Pro although not Arg or Lys, and Yaa may be Pro. Amino acid amides and methyl esters are also readily hydrolyzed, but rates on arylamides are exceedingly low.. The catalysed reaction is Release of an N-terminal amino acid, preferentially leucine, but not glutamic or aspartic acids.. Functionally, presumably involved in the processing and regular turnover of intracellular proteins. Catalyzes the removal of unsubstituted N-terminal amino acids from various peptides. This Bacillus cereus (strain ATCC 14579 / DSM 31 / CCUG 7414 / JCM 2152 / NBRC 15305 / NCIMB 9373 / NCTC 2599 / NRRL B-3711) protein is Probable cytosol aminopeptidase.